A 324-amino-acid chain; its full sequence is MSSEQEFEKPVIELRQKIADLRAFAMERDMDLSTEIKKMEARLSELEEEVYANLQPWERVQIARDHERPTTLDYVDVLFEDFLEMHGDRLFGDDKAIVGGIATYKGKPVTVIGHQRGKDTKENIVRYFGSPHPEGYRKALRLMKQAEKFKRPIICFIDTKGAYPGKAAEERGQSEAIARNLLEMAGLKVPTISIVIGEGGSGGALALGVADEIHMLENATYSVISPEGAAAILWKDAGKAKKAAESMRITAPDLYELGIIDSIIPEPRGGAQRNLHQQADEIDRLLEKALTRLAEKPVDVLLDERYEKFMKIGHIPEEAATTGQ.

One can recognise a CoA carboxyltransferase C-terminal domain in the interval 42 to 296 (RLSELEEEVY…EKALTRLAEK (255 aa)).

It belongs to the AccA family. Acetyl-CoA carboxylase is a heterohexamer composed of biotin carboxyl carrier protein (AccB), biotin carboxylase (AccC) and two subunits each of ACCase subunit alpha (AccA) and ACCase subunit beta (AccD).

Its subcellular location is the cytoplasm. It carries out the reaction N(6)-carboxybiotinyl-L-lysyl-[protein] + acetyl-CoA = N(6)-biotinyl-L-lysyl-[protein] + malonyl-CoA. It participates in lipid metabolism; malonyl-CoA biosynthesis; malonyl-CoA from acetyl-CoA: step 1/1. Functionally, component of the acetyl coenzyme A carboxylase (ACC) complex. First, biotin carboxylase catalyzes the carboxylation of biotin on its carrier protein (BCCP) and then the CO(2) group is transferred by the carboxyltransferase to acetyl-CoA to form malonyl-CoA. The sequence is that of Acetyl-coenzyme A carboxylase carboxyl transferase subunit alpha from Shouchella clausii (strain KSM-K16) (Alkalihalobacillus clausii).